The sequence spans 450 residues: MRFKFSLIALSLEVVMIVSFALFVEYETSQNGSQKSASQQNASQQNAAAQQNASQQGNASSPAKEDQFFQLYPLFQHVHVMIFVGFGFLMTFLKKYGFSGVGFNLFLAALGLQWGTIVQGLLHSHGLKFPFRIKNMINADFSTATVLISFGAVLGKTSPIQMIIMTILEIAVFAGNEHLVTEIFKASDTGASMTIHAFGAYFGLAVAGVLYRSGLKHGHPNEESVYHSDLFAMIGTLFLWMFWPSFNSAIAQPENNQYRAIVNTYMSLAACVITAYALSSLVERRGRLDMVHIQNATLAGGVAVGTCADMEIPLYFAMTIGSIAGIISVLGYKFLSPLLAHKLMIHDTCGVHNLHGLPGVFGGLASIVAISWGKSTVSTMAMQATALGSSIGSAIVGGLVTGLILKLPVWNQPPDEYCFDDSVSWKVPKYRELDNYFFQHVTHNHVEHEV.

The Cytoplasmic segment spans residues 1 to 4 (MRFK). Residues 5 to 25 (FSLIALSLEVVMIVSFALFVE) traverse the membrane as a helical segment. Residues 26-72 (YETSQNGSQKSASQQNASQQNAAAQQNASQQGNASSPAKEDQFFQLY) lie on the Extracellular side of the membrane. Asparagine 31, asparagine 41, asparagine 52, and asparagine 58 each carry an N-linked (GlcNAc...) asparagine glycan. Residues 34–61 (QKSASQQNASQQNAAAQQNASQQGNASS) are disordered. A helical membrane pass occupies residues 73–93 (PLFQHVHVMIFVGFGFLMTFL). The Cytoplasmic portion of the chain corresponds to 94–97 (KKYG). The helical transmembrane segment at 98 to 118 (FSGVGFNLFLAALGLQWGTIV) threads the bilayer. The Extracellular portion of the chain corresponds to 119 to 134 (QGLLHSHGLKFPFRIK). Residues 135–155 (NMINADFSTATVLISFGAVLG) traverse the membrane as a helical segment. At 156–159 (KTSP) the chain is on the cytoplasmic side. Residues 160–180 (IQMIIMTILEIAVFAGNEHLV) traverse the membrane as a helical segment. The Extracellular portion of the chain corresponds to 181 to 189 (TEIFKASDT). The chain crosses the membrane as a helical span at residues 190–210 (GASMTIHAFGAYFGLAVAGVL). Residues 211–229 (YRSGLKHGHPNEESVYHSD) lie on the Cytoplasmic side of the membrane. The chain crosses the membrane as a helical span at residues 230-250 (LFAMIGTLFLWMFWPSFNSAI). At 251 to 260 (AQPENNQYRA) the chain is on the extracellular side. The chain crosses the membrane as a helical span at residues 261-281 (IVNTYMSLAACVITAYALSSL). Residues 282 to 289 (VERRGRLD) lie on the Cytoplasmic side of the membrane. A helical transmembrane segment spans residues 290-307 (MVHIQNATLAGGVAVGTC). The Extracellular segment spans residues 308-311 (ADME). A helical transmembrane segment spans residues 312-332 (IPLYFAMTIGSIAGIISVLGY). Residues 333 to 349 (KFLSPLLAHKLMIHDTC) are Cytoplasmic-facing. The helical transmembrane segment at 350–370 (GVHNLHGLPGVFGGLASIVAI) threads the bilayer. Residues 371-384 (SWGKSTVSTMAMQA) are Extracellular-facing. Residues 385-405 (TALGSSIGSAIVGGLVTGLIL) traverse the membrane as a helical segment. Residues 406-450 (KLPVWNQPPDEYCFDDSVSWKVPKYRELDNYFFQHVTHNHVEHEV) lie on the Cytoplasmic side of the membrane.

It belongs to the ammonium transporter (TC 2.A.49) family. Rh subfamily. Homodimer. Heterotrimer; a RHCE monomer interacts with a RHAG homodimer. Component of the ankyrin-1 complex in the erythrocyte, composed of ANK1, RHCE, RHAG, SLC4A1, EPB42, GYPA, GYPB and AQP1. Interacts with GYPB (via the N-terminal); this interaction bridges the (RHAG)2(RHCE) heterotrimer with the SLC4A1 Band 3 I dimer complexed with GYPA. In terms of processing, glycosylated.

The protein resides in the membrane. It carries out the reaction methylamine(out) = methylamine(in). The catalysed reaction is NH4(+)(in) = NH4(+)(out). The enzyme catalyses CO2(out) = CO2(in). Component of the ankyrin-1 complex, a multiprotein complex involved in the stability and shape of the erythrocyte membrane. Heterotrimer with RHCE (RHAG)2(RHCE), that transports ammonium and its related derivative methylammonium, in both neutral and ionic forms, across the erythrocyte membrane. The transport of NH4(+) is electrogenic and masks the NH3 transport. Also, may act as a CO2 channel. Moreover in erythrocyte, regulates RHD membrane expression and is associated with rhesus blood group antigen expression. In Rattus norvegicus (Rat), this protein is Ammonium transporter Rh type A.